A 689-amino-acid polypeptide reads, in one-letter code: MSQRRLFVTTALPYANGNFHIGHIMEYIQADIWVRYQRMQGHEVNFVGADDAHGAPIMIAAEKAGKTPQQFVADIAAGRKPYLDGFHISFDNWHSTDGPENHQLAQQIYLDLKKAGLIETKTVEQFFDPDKNMFLPDRFIKGQCPKCGAKDQYGDNCEVCGAVYAPTDLINPYSALSGATPVLKSSEHFFFRLSDPRCVAFLEQWTQDGMLQTEVANKVKEWFSPRQNVDGTTSEGLDDWDISRDAPYFGIEIPDAPGKYFYVWLDAPVGYLASLKNLLDKKGLDYDAYMADPGLEQYHFIGKDIITFHTLFWPAMLHFSGRKTPDNVFVHGFLTVNNGEKMSKSRGTGLDPLKYLNLGMNPEWLRYYLAAKLNARNEDIDFNPEDFMARVNADLVGKYINIASRAAGFISKRFDGRLGEPSADGDALLEVLRGASPAIQELYAEREYGKALREVMQLADRVNGYVDQNKPWELAKQPGMEARLLDVCTVCIEAFRLLTIYLKPVLPALGTQVEDFLKTGSLTFRDAGASLGSGHVIGEYKHLMQRVDVKQLDALFEPPAAAPEPAQLTPGGEALAAPITIDDFAKVDLRIAKIVNCEAVEGSTKLLRLTLDVGEGKMRNVFSGIASAYTPDQLIGKHTVVVANLAPRKMKFGVSEGMVLAASHADEKAQPGIYVLEPLPGASPGLRVR.

Positions 13–23 match the 'HIGH' region motif; that stretch reads PYANGNFHIGH. Positions 144, 147, 157, and 160 each coordinate Zn(2+). Positions 341 to 345 match the 'KMSKS' region motif; sequence KMSKS. Lys344 serves as a coordination point for ATP. One can recognise a tRNA-binding domain in the interval 583–689; it reads DFAKVDLRIA…PGASPGLRVR (107 aa).

The protein belongs to the class-I aminoacyl-tRNA synthetase family. MetG type 1 subfamily. Homodimer. The cofactor is Zn(2+).

The protein resides in the cytoplasm. The enzyme catalyses tRNA(Met) + L-methionine + ATP = L-methionyl-tRNA(Met) + AMP + diphosphate. Functionally, is required not only for elongation of protein synthesis but also for the initiation of all mRNA translation through initiator tRNA(fMet) aminoacylation. The polypeptide is Methionine--tRNA ligase (Polaromonas sp. (strain JS666 / ATCC BAA-500)).